We begin with the raw amino-acid sequence, 1887 residues long: Protein TIC 214 (1887 aa).

6 consecutive transmembrane segments (helical) span residues 18 to 38, 64 to 84, 87 to 107, 124 to 144, 172 to 192, and 221 to 241; these read IINS…FSIG, FITG…HLAL, PHTI…WNNH, LSIQ…HFIL, VGWL…LVWI, and IFSI…PSPI. Disordered regions lie at residues 248–300, 786–805, and 1569–1603; these read EASK…EGWD, EEQT…DNKR, and LPSN…NLSP. Acidic residues predominate over residues 256 to 268; sequence VESEEERDVEIET. The stretch at 775 to 816 forms a coiled coil; that stretch reads KEREFKILESREEQTKREEKKEKDKKEDNKRKEQARIAIEEA. Over residues 1578-1597 the composition is skewed to basic and acidic residues; that stretch reads RSQETKEPPSQRERGSDIEN.

The protein belongs to the TIC214 family. In terms of assembly, part of the Tic complex.

The protein resides in the plastid. Its subcellular location is the chloroplast inner membrane. Functionally, involved in protein precursor import into chloroplasts. May be part of an intermediate translocation complex acting as a protein-conducting channel at the inner envelope. This is Protein TIC 214 from Solanum bulbocastanum (Wild potato).